Here is a 490-residue protein sequence, read N- to C-terminus: N-succinylglutamate 5-semialdehyde dehydrogenase (490 aa).

224-229 provides a ligand contact to NAD(+); the sequence is GSSPTG. Catalysis depends on residues Glu247 and Cys281.

The protein belongs to the aldehyde dehydrogenase family. AstD subfamily.

It catalyses the reaction N-succinyl-L-glutamate 5-semialdehyde + NAD(+) + H2O = N-succinyl-L-glutamate + NADH + 2 H(+). It functions in the pathway amino-acid degradation; L-arginine degradation via AST pathway; L-glutamate and succinate from L-arginine: step 4/5. Catalyzes the NAD-dependent reduction of succinylglutamate semialdehyde into succinylglutamate. This Hahella chejuensis (strain KCTC 2396) protein is N-succinylglutamate 5-semialdehyde dehydrogenase.